The following is a 416-amino-acid chain: Gamma-glutamyl phosphate reductase (416 aa).

Belongs to the gamma-glutamyl phosphate reductase family.

The protein resides in the cytoplasm. The enzyme catalyses L-glutamate 5-semialdehyde + phosphate + NADP(+) = L-glutamyl 5-phosphate + NADPH + H(+). It functions in the pathway amino-acid biosynthesis; L-proline biosynthesis; L-glutamate 5-semialdehyde from L-glutamate: step 2/2. In terms of biological role, catalyzes the NADPH-dependent reduction of L-glutamate 5-phosphate into L-glutamate 5-semialdehyde and phosphate. The product spontaneously undergoes cyclization to form 1-pyrroline-5-carboxylate. This chain is Gamma-glutamyl phosphate reductase, found in Streptococcus pyogenes serotype M3 (strain ATCC BAA-595 / MGAS315).